A 293-amino-acid chain; its full sequence is SAGA-associated factor 29 (293 aa).

A coiled-coil region spans residues 3–88; that stretch reads LVSADSRIAE…KALDKIAEIK (86 aa). The SGF29 C-terminal domain maps to 152–293; it reads GDYVAKPGDK…VVACKEPKKK (142 aa). 2 histone H3K4me3 N-terminus binding regions span residues 194–196 and 240–243; these read DID and QTTC. A histone H3K4me3 binding region spans residues 264–266; that stretch reads FED. Residue Lys288 is modified to N6-acetyllysine.

This sequence belongs to the SGF29 family. Interacts with dimethylated and trimethylated 'Lys-4' of histone H3 (H3K4me2 and H3K4me3), with a preference for the trimethylated form (H3K4me3). Component of some SAGA-type complexes. Component of the ADA2A-containing complex (ATAC), composed of KAT14, KAT2A, TADA2L, TADA3L, ZZ3, MBIP, WDR5, YEATS2, CCDC101 and DR1. Interacts with (methylated) CGAS. Interacts with TADA3L, GCN5L2, SUPT3H and MYC. Widely expressed with highest levels in testis. Highly expressed in hepatoma and other tumor cell lines.

Its subcellular location is the nucleus. Chromatin reader component of some histone acetyltransferase (HAT) SAGA-type complexes like the TFTC-HAT, ATAC or STAGA complexes. SGF29 specifically recognizes and binds methylated 'Lys-4' of histone H3 (H3K4me), with a preference for trimethylated form (H3K4me3). In the SAGA-type complexes, SGF29 is required to recruit complexes to H3K4me. Involved in the response to endoplasmic reticulum (ER) stress by recruiting the SAGA complex to H3K4me, thereby promoting histone H3 acetylation and cell survival. Also binds non-histone proteins that are methylated on Lys residues: specifically recognizes and binds CGAS monomethylated on 'Lys-491'. May be involved in MYC-mediated oncogenic transformation. In Rattus norvegicus (Rat), this protein is SAGA-associated factor 29.